The sequence spans 261 residues: MGKYNLTALRVRQTALRQKEAGKTHQIPKWIDVVRDIPPAQVLVRNQQQQHQLVRQRLKTLPGASKPQVVFEVQEKRVKPKKASRMFLPTEIKYEEDLLRKEFFRDHPWELARPRVVLESTGKDYENYDWSRLQQPGKRLDGESVVQRQLWLLNNVPDMTKSTAYDIARREFYRLRLQEDIERRVAAEEAEATGATFGPTRLEIGMELENQEYERWKVWAKSEAQVQEQRAAAFTGAPEIPSTEDSLGLEEGVEEKQPQQA.

Residues 228-261 form a disordered region; that stretch reads EQRAAAFTGAPEIPSTEDSLGLEEGVEEKQPQQA.

This sequence belongs to the mitochondrion-specific ribosomal protein mS23 family. As to quaternary structure, component of the mitochondrial small ribosomal subunit.

Its subcellular location is the mitochondrion. In Aspergillus oryzae (strain ATCC 42149 / RIB 40) (Yellow koji mold), this protein is Small ribosomal subunit protein mS23 (rsm25).